We begin with the raw amino-acid sequence, 497 residues long: Taxane 10-beta-hydroxylase (497 aa).

Cys-443 contributes to the heme binding site.

The protein belongs to the cytochrome P450 family. The cofactor is heme.

It carries out the reaction taxa-4(20),11-dien-5alpha-yl acetate + reduced [NADPH--hemoprotein reductase] + O2 = 10beta-hydroxytaxa-4(20),11-dien-5alpha-yl acetate + oxidized [NADPH--hemoprotein reductase] + H2O + H(+). It participates in alkaloid biosynthesis; taxol biosynthesis; 10-deacetyl-2-debenzoylbaccatin III from taxa-4(20),11-dien-5alpha-ol: step 2/3. Its function is as follows. Involved in the transformation of a taxadienyl acetate by hydroxylation at C10 to yield taxadien-5-alpha-acetoxy-10-beta-ol. This chain is Taxane 10-beta-hydroxylase (CYP725A1), found in Taxus cuspidata (Japanese yew).